Consider the following 1889-residue polypeptide: Treslin (1889 aa).

Phosphoserine occurs at positions 295, 599, 820, 861, 919, 934, 1002, 1027, and 1078. Over residues 812–832 (DSMSQESMSPPPSSSTHRSVS) the composition is skewed to low complexity. The tract at residues 812-836 (DSMSQESMSPPPSSSTHRSVSAITE) is disordered. Positions 979 to 1063 (RLLHRQIKGR…RENFPVQSIQ (85 aa)) are disordered. The segment covering 1020–1050 (LSFSRTNSGSFYSVSQPKSRSVQRIHSSQQE) has biased composition (polar residues). 6 disordered regions span residues 1098–1421 (EIST…SQFS), 1471–1508 (LPGE…SSSE), 1520–1543 (GKQR…SPQT), 1630–1714 (SCTP…SLEQ), 1730–1751 (VCQL…ETSW), and 1841–1875 (QGRT…TLSR). Polar residues predominate over residues 1127-1179 (TAQTLLYTPERLQNSPTEMTSAEGTISEATIKTPSSHGYNSPFASKVTSQKTV). At threonine 1134 the chain carries Phosphothreonine. Serine 1141 carries the post-translational modification Phosphoserine. Over residues 1187 to 1197 (SPPLTKLPSTP) the composition is skewed to low complexity. Over residues 1203–1219 (QPPQCSSDCTWPHSVNS) the composition is skewed to polar residues. Positions 1339 to 1351 (TSPSVTSSVSCPV) are enriched in low complexity. The span at 1373–1382 (KLRRSCRKKS) shows a compositional bias: basic residues. Residue serine 1406 is modified to Phosphoserine. The segment covering 1496 to 1508 (LVPAPSSVSSSSE) has biased composition (low complexity). Composition is skewed to polar residues over residues 1525-1543 (DAAQ…SPQT) and 1652-1662 (WTPSPKQSGKT). Positions 1705 to 1714 (PEGKERSLEQ) are enriched in basic and acidic residues.

This sequence belongs to the treslin family. In terms of assembly, interacts with TOPBP1 (via BRCT domains); interaction takes place in a CDK2-dependent manner. Component of the replisome complex composed of at least DONSON, MCM2, MCM7, PCNA and TICRR.

It localises to the nucleus. Its function is as follows. Regulator of DNA replication and S/M and G2/M checkpoints. Regulates the triggering of DNA replication initiation via its interaction with TOPBP1 by participating in CDK2-mediated loading of CDC45L onto replication origins. Required for the transition from pre-replication complex (pre-RC) to pre-initiation complex (pre-IC). Required to prevent mitotic entry after treatment with ionizing radiation. The polypeptide is Treslin (Ticrr) (Mus musculus (Mouse)).